The following is a 241-amino-acid chain: Uridylate kinase (241 aa).

12–15 (KLSG) is an ATP binding site. An involved in allosteric activation by GTP region spans residues 20-25 (GDKGQG). Gly54 contributes to the UMP binding site. ATP is bound by residues Gly55 and Arg59. UMP is bound by residues Asp74 and 135 to 142 (TGSPYFST). 3 residues coordinate ATP: Asn163, Tyr169, and Asp172.

This sequence belongs to the UMP kinase family. As to quaternary structure, homohexamer.

It is found in the cytoplasm. The catalysed reaction is UMP + ATP = UDP + ADP. The protein operates within pyrimidine metabolism; CTP biosynthesis via de novo pathway; UDP from UMP (UMPK route): step 1/1. Its activity is regulated as follows. Allosterically activated by GTP. Inhibited by UTP. Catalyzes the reversible phosphorylation of UMP to UDP. The chain is Uridylate kinase from Leuconostoc mesenteroides subsp. mesenteroides (strain ATCC 8293 / DSM 20343 / BCRC 11652 / CCM 1803 / JCM 6124 / NCDO 523 / NBRC 100496 / NCIMB 8023 / NCTC 12954 / NRRL B-1118 / 37Y).